The chain runs to 1433 residues: DNA-directed RNA polymerase subunit beta' (1433 aa).

Residues Cys-66, Cys-68, Cys-81, and Cys-84 each contribute to the Zn(2+) site. Positions 474, 476, and 478 each coordinate Mg(2+). Cys-823, Cys-897, Cys-904, and Cys-907 together coordinate Zn(2+).

Belongs to the RNA polymerase beta' chain family. The RNAP catalytic core consists of 2 alpha, 1 beta, 1 beta' and 1 omega subunit. When a sigma factor is associated with the core the holoenzyme is formed, which can initiate transcription. The cofactor is Mg(2+). Zn(2+) serves as cofactor.

The catalysed reaction is RNA(n) + a ribonucleoside 5'-triphosphate = RNA(n+1) + diphosphate. DNA-dependent RNA polymerase catalyzes the transcription of DNA into RNA using the four ribonucleoside triphosphates as substrates. The chain is DNA-directed RNA polymerase subunit beta' from Amoebophilus asiaticus (strain 5a2).